A 33-amino-acid polypeptide reads, in one-letter code: Cytochrome b6-f complex subunit 8 (33 aa).

A helical transmembrane segment spans residues 2 to 22; it reads IFTLGWASLAAIFTFSIAMVV.

It belongs to the PetN family. As to quaternary structure, the 4 large subunits of the cytochrome b6-f complex are cytochrome b6, subunit IV (17 kDa polypeptide, PetD), cytochrome f and the Rieske protein, while the 4 small subunits are PetG, PetL, PetM and PetN. The complex functions as a dimer.

The protein localises to the cellular thylakoid membrane. Component of the cytochrome b6-f complex, which mediates electron transfer between photosystem II (PSII) and photosystem I (PSI), cyclic electron flow around PSI, and state transitions. This chain is Cytochrome b6-f complex subunit 8, found in Prochlorococcus marinus (strain NATL2A).